We begin with the raw amino-acid sequence, 307 residues long: Aspartate carbamoyltransferase catalytic subunit (307 aa).

Carbamoyl phosphate-binding residues include arginine 59 and threonine 60. Lysine 87 is a binding site for L-aspartate. Carbamoyl phosphate-binding residues include arginine 109, histidine 137, and glutamine 140. Positions 173 and 223 each coordinate L-aspartate. Residues glycine 266 and proline 267 each coordinate carbamoyl phosphate.

It belongs to the aspartate/ornithine carbamoyltransferase superfamily. ATCase family. Heterododecamer (2C3:3R2) of six catalytic PyrB chains organized as two trimers (C3), and six regulatory PyrI chains organized as three dimers (R2).

It carries out the reaction carbamoyl phosphate + L-aspartate = N-carbamoyl-L-aspartate + phosphate + H(+). The protein operates within pyrimidine metabolism; UMP biosynthesis via de novo pathway; (S)-dihydroorotate from bicarbonate: step 2/3. Functionally, catalyzes the condensation of carbamoyl phosphate and aspartate to form carbamoyl aspartate and inorganic phosphate, the committed step in the de novo pyrimidine nucleotide biosynthesis pathway. The chain is Aspartate carbamoyltransferase catalytic subunit from Helicobacter pylori (strain G27).